The primary structure comprises 300 residues: Formyltetrahydrofolate deformylase (300 aa).

The 82-residue stretch at 21–102 (RLLVSCPDQP…MTWSLTLASE (82 aa)) folds into the ACT domain. The active site involves Asp-244.

It belongs to the PurU family.

The catalysed reaction is (6R)-10-formyltetrahydrofolate + H2O = (6S)-5,6,7,8-tetrahydrofolate + formate + H(+). The protein operates within purine metabolism; IMP biosynthesis via de novo pathway; formate from 10-formyl-5,6,7,8-tetrahydrofolate: step 1/1. Functionally, catalyzes the hydrolysis of 10-formyltetrahydrofolate (formyl-FH4) to formate and tetrahydrofolate (FH4). In Bacillus subtilis (strain 168), this protein is Formyltetrahydrofolate deformylase.